A 265-amino-acid polypeptide reads, in one-letter code: Phosphate import ATP-binding protein PstB (265 aa).

The region spanning 11–260 (VSADEVKIAA…PRDPRTESYI (250 aa)) is the ABC transporter domain. 50–57 (GPSGCGKS) provides a ligand contact to ATP.

Belongs to the ABC transporter superfamily. Phosphate importer (TC 3.A.1.7) family. The complex is composed of two ATP-binding proteins (PstB), two transmembrane proteins (PstC and PstA) and a solute-binding protein (PstS).

It is found in the cell inner membrane. It carries out the reaction phosphate(out) + ATP + H2O = ADP + 2 phosphate(in) + H(+). Part of the ABC transporter complex PstSACB involved in phosphate import. Responsible for energy coupling to the transport system. This chain is Phosphate import ATP-binding protein PstB, found in Cereibacter sphaeroides (strain ATCC 17023 / DSM 158 / JCM 6121 / CCUG 31486 / LMG 2827 / NBRC 12203 / NCIMB 8253 / ATH 2.4.1.) (Rhodobacter sphaeroides).